The primary structure comprises 156 residues: Ribosomal RNA large subunit methyltransferase H (156 aa).

S-adenosyl-L-methionine contacts are provided by residues L73, G104, and 123-128 (LSSLTL).

It belongs to the RNA methyltransferase RlmH family. In terms of assembly, homodimer.

It localises to the cytoplasm. It carries out the reaction pseudouridine(1915) in 23S rRNA + S-adenosyl-L-methionine = N(3)-methylpseudouridine(1915) in 23S rRNA + S-adenosyl-L-homocysteine + H(+). Specifically methylates the pseudouridine at position 1915 (m3Psi1915) in 23S rRNA. The polypeptide is Ribosomal RNA large subunit methyltransferase H (Ralstonia nicotianae (strain ATCC BAA-1114 / GMI1000) (Ralstonia solanacearum)).